Here is a 443-residue protein sequence, read N- to C-terminus: ATP-dependent protease ATPase subunit HslU (443 aa).

ATP contacts are provided by residues Ile-18, 60 to 65 (GVGKTE), Asp-256, Glu-321, and Arg-393.

This sequence belongs to the ClpX chaperone family. HslU subfamily. A double ring-shaped homohexamer of HslV is capped on each side by a ring-shaped HslU homohexamer. The assembly of the HslU/HslV complex is dependent on binding of ATP.

The protein localises to the cytoplasm. ATPase subunit of a proteasome-like degradation complex; this subunit has chaperone activity. The binding of ATP and its subsequent hydrolysis by HslU are essential for unfolding of protein substrates subsequently hydrolyzed by HslV. HslU recognizes the N-terminal part of its protein substrates and unfolds these before they are guided to HslV for hydrolysis. This Escherichia coli O139:H28 (strain E24377A / ETEC) protein is ATP-dependent protease ATPase subunit HslU.